Here is a 414-residue protein sequence, read N- to C-terminus: MAYFQRLISCIFVLFLLSLAFACEARVLLDENNANDQGFVRVNGAHFELNGSPFLFNGFNSYWLMHVAAEPSERYKVSEVLREASSAGLSVCRTWAFSDGGDRALQISPGVYDERVFQGLDFVISEAKKYGIRLILSFVNNYNDFGGKAQYVQWARNAGAQINGDDDFYTNYITKNYYKNHIKKVVTRFNTITGMTYKDDSTIMAWELMNEPRNQADYSGNTLNAWVQEMASFVKSLDNKHLLEIGMEGFYGDSVPERKSINPGYQVGTDFISNHLIKEIDFATIHAYTDQWLSGQSDDAQMIFMQKWMTSHWQDAKNILKKPLVLAEFGKSSRDPGYNQNIRDTFMSTIYRNIYSLAKDGGTMGGSLIWQLVAQGMENYEDGYCIELGKNPSTAGIITSQSHAMTALAHLVKI.

The first 25 residues, 1–25 (MAYFQRLISCIFVLFLLSLAFACEA), serve as a signal peptide directing secretion. Substrate-binding residues include Trp-95 and Asn-210. Glu-211 serves as the catalytic Proton donor. Residue Tyr-288 coordinates substrate. The Nucleophile role is filled by Glu-328. Residue Trp-370 coordinates substrate.

The protein belongs to the glycosyl hydrolase 5 (cellulase A) family.

It is found in the secreted. It catalyses the reaction Random hydrolysis of (1-&gt;4)-beta-D-mannosidic linkages in mannans, galactomannans and glucomannans.. Its function is as follows. Possesses endo-beta-mannanase activity in vitro. May be involved in seed germination by weakening the endosperm cap prior to radicle emergence. This Solanum lycopersicum (Tomato) protein is Mannan endo-1,4-beta-mannosidase 2 (MAN2).